We begin with the raw amino-acid sequence, 445 residues long: Histidinol dehydrogenase (445 aa).

Positions 130, 192, and 215 each coordinate NAD(+). The substrate site is built by Ser-238, Gln-260, and His-263. 2 residues coordinate Zn(2+): Gln-260 and His-263. Active-site proton acceptor residues include Glu-328 and His-329. 4 residues coordinate substrate: His-329, Asp-362, Glu-416, and His-421. Asp-362 serves as a coordination point for Zn(2+). Residue His-421 participates in Zn(2+) binding.

This sequence belongs to the histidinol dehydrogenase family. Zn(2+) is required as a cofactor.

The catalysed reaction is L-histidinol + 2 NAD(+) + H2O = L-histidine + 2 NADH + 3 H(+). It functions in the pathway amino-acid biosynthesis; L-histidine biosynthesis; L-histidine from 5-phospho-alpha-D-ribose 1-diphosphate: step 9/9. In terms of biological role, catalyzes the sequential NAD-dependent oxidations of L-histidinol to L-histidinaldehyde and then to L-histidine. This Gloeobacter violaceus (strain ATCC 29082 / PCC 7421) protein is Histidinol dehydrogenase.